Reading from the N-terminus, the 276-residue chain is Eukaryotic translation initiation factor 3 subunit G (276 aa).

Serine 148 is subject to Phosphoserine. The RRM domain occupies 195–274; sequence TTLKISQLNS…LILHLEWSKK (80 aa).

This sequence belongs to the eIF-3 subunit G family. In terms of assembly, component of the eukaryotic translation initiation factor 3 (eIF-3) complex.

It is found in the cytoplasm. Functionally, RNA-binding component of the eukaryotic translation initiation factor 3 (eIF-3) complex, which is involved in protein synthesis of a specialized repertoire of mRNAs and, together with other initiation factors, stimulates binding of mRNA and methionyl-tRNAi to the 40S ribosome. The eIF-3 complex specifically targets and initiates translation of a subset of mRNAs involved in cell proliferation. This subunit can bind 18S rRNA. This is Eukaryotic translation initiation factor 3 subunit G from Debaryomyces hansenii (strain ATCC 36239 / CBS 767 / BCRC 21394 / JCM 1990 / NBRC 0083 / IGC 2968) (Yeast).